A 273-amino-acid polypeptide reads, in one-letter code: Proteasome subunit beta type-5-B (273 aa).

A propeptide spans Met-1–Gly-57 (removed in mature form). Thr-58 serves as the catalytic Nucleophile.

This sequence belongs to the peptidase T1B family. In terms of assembly, component of the 20S core complex of the 26S proteasome. The 26S proteasome is composed of a core protease (CP), known as the 20S proteasome, capped at one or both ends by the 19S regulatory particle (RP/PA700). The 20S proteasome core is composed of 28 subunits that are arranged in four stacked rings, resulting in a barrel-shaped structure. The two end rings are each formed by seven alpha subunits, and the two central rings are each formed by seven beta subunits. The catalytic chamber with the active sites is on the inside of the barrel.

It localises to the cytoplasm. The protein localises to the nucleus. It carries out the reaction Cleavage of peptide bonds with very broad specificity.. Its function is as follows. The proteasome is a multicatalytic proteinase complex which is characterized by its ability to cleave peptides with Arg, Phe, Tyr, Leu, and Glu adjacent to the leaving group at neutral or slightly basic pH. The proteasome has an ATP-dependent proteolytic activity. This Arabidopsis thaliana (Mouse-ear cress) protein is Proteasome subunit beta type-5-B (PBE2).